Here is a 174-residue protein sequence, read N- to C-terminus: Peptide deformylase (174 aa).

Fe cation is bound by residues Cys-94 and His-136. Glu-137 is a catalytic residue. His-140 contributes to the Fe cation binding site.

The protein belongs to the polypeptide deformylase family. Requires Fe(2+) as cofactor.

The enzyme catalyses N-terminal N-formyl-L-methionyl-[peptide] + H2O = N-terminal L-methionyl-[peptide] + formate. Functionally, removes the formyl group from the N-terminal Met of newly synthesized proteins. Requires at least a dipeptide for an efficient rate of reaction. N-terminal L-methionine is a prerequisite for activity but the enzyme has broad specificity at other positions. This chain is Peptide deformylase, found in Rhizobium meliloti (strain 1021) (Ensifer meliloti).